The primary structure comprises 100 residues: Small ribosomal subunit protein uS14c (100 aa).

It belongs to the universal ribosomal protein uS14 family. As to quaternary structure, part of the 30S ribosomal subunit.

It localises to the plastid. Its subcellular location is the chloroplast. In terms of biological role, binds 16S rRNA, required for the assembly of 30S particles. The polypeptide is Small ribosomal subunit protein uS14c (Porphyra purpurea (Red seaweed)).